The chain runs to 277 residues: Large ribosomal subunit protein uL2 (277 aa).

Positions 223-277 (VAMNPVDHPHGGGEGRTSTGRHPVTPWGKRTLGKKTRKRKASDKYIIRSRRARKR) are disordered. The span at 253–277 (TLGKKTRKRKASDKYIIRSRRARKR) shows a compositional bias: basic residues.

Belongs to the universal ribosomal protein uL2 family. Part of the 50S ribosomal subunit. Forms a bridge to the 30S subunit in the 70S ribosome.

In terms of biological role, one of the primary rRNA binding proteins. Required for association of the 30S and 50S subunits to form the 70S ribosome, for tRNA binding and peptide bond formation. It has been suggested to have peptidyltransferase activity; this is somewhat controversial. Makes several contacts with the 16S rRNA in the 70S ribosome. In Halothermothrix orenii (strain H 168 / OCM 544 / DSM 9562), this protein is Large ribosomal subunit protein uL2.